Consider the following 119-residue polypeptide: DNA-directed RNA polymerase subunit omega (119 aa).

It belongs to the RNA polymerase subunit omega family. As to quaternary structure, the RNAP catalytic core consists of 2 alpha, 1 beta, 1 beta' and 1 omega subunit. When a sigma factor is associated with the core the holoenzyme is formed, which can initiate transcription.

The enzyme catalyses RNA(n) + a ribonucleoside 5'-triphosphate = RNA(n+1) + diphosphate. Its function is as follows. Promotes RNA polymerase assembly. Latches the N- and C-terminal regions of the beta' subunit thereby facilitating its interaction with the beta and alpha subunits. The sequence is that of DNA-directed RNA polymerase subunit omega from Caulobacter sp. (strain K31).